We begin with the raw amino-acid sequence, 40 residues long: Adenylate kinase (40 aa).

10–15 lines the ATP pocket; that stretch reads GAGKGT. Residues 30–40 are NMP; that stretch reads STGDMFIKAIK. Thr-31 is a binding site for AMP.

Belongs to the adenylate kinase family. In terms of assembly, monomer.

The protein resides in the cytoplasm. It carries out the reaction AMP + ATP = 2 ADP. It participates in purine metabolism; AMP biosynthesis via salvage pathway; AMP from ADP: step 1/1. Functionally, catalyzes the reversible transfer of the terminal phosphate group between ATP and AMP. Plays an important role in cellular energy homeostasis and in adenine nucleotide metabolism. This is Adenylate kinase (adk) from Staphylococcus carnosus.